A 276-amino-acid chain; its full sequence is tRNA (guanine-N(7)-)-methyltransferase (276 aa).

A disordered region spans residues 1–23; the sequence is MRPDPAPLDPTDASPAQARRHQP. S-adenosyl-L-methionine contacts are provided by E103, E128, D155, and D178. D178 is an active-site residue. Substrate contacts are provided by residues K182, D214, and 252–255; that span reads TRYE.

The protein belongs to the class I-like SAM-binding methyltransferase superfamily. TrmB family.

It catalyses the reaction guanosine(46) in tRNA + S-adenosyl-L-methionine = N(7)-methylguanosine(46) in tRNA + S-adenosyl-L-homocysteine. It functions in the pathway tRNA modification; N(7)-methylguanine-tRNA biosynthesis. Functionally, catalyzes the formation of N(7)-methylguanine at position 46 (m7G46) in tRNA. The chain is tRNA (guanine-N(7)-)-methyltransferase from Cutibacterium acnes (strain DSM 16379 / KPA171202) (Propionibacterium acnes).